The primary structure comprises 363 residues: Chorismate synthase (363 aa).

A disordered region spans residues 44–63 (DLDRRKPGTSRHTTQRQEPD). Residues arginine 48 and arginine 54 each contribute to the NADP(+) site. FMN-binding positions include 125-127 (RSS), 237-238 (NA), glycine 277, 292-296 (KPTSS), and arginine 318.

The protein belongs to the chorismate synthase family. Homotetramer. Requires FMNH2 as cofactor.

The catalysed reaction is 5-O-(1-carboxyvinyl)-3-phosphoshikimate = chorismate + phosphate. It functions in the pathway metabolic intermediate biosynthesis; chorismate biosynthesis; chorismate from D-erythrose 4-phosphate and phosphoenolpyruvate: step 7/7. Its function is as follows. Catalyzes the anti-1,4-elimination of the C-3 phosphate and the C-6 proR hydrogen from 5-enolpyruvylshikimate-3-phosphate (EPSP) to yield chorismate, which is the branch point compound that serves as the starting substrate for the three terminal pathways of aromatic amino acid biosynthesis. This reaction introduces a second double bond into the aromatic ring system. The chain is Chorismate synthase from Pseudomonas fluorescens (strain ATCC BAA-477 / NRRL B-23932 / Pf-5).